The chain runs to 992 residues: Vacuolar membrane protease (992 aa).

The Cytoplasmic portion of the chain corresponds to 1-24 (MSPAMANPRVRKFNPIAFTPLPVT). A helical transmembrane segment spans residues 25 to 45 (FITTIVYLAVLILVLVTYLVV). Topologically, residues 46–390 (PPAPTLEMSP…SAFAVFRLHT (345 aa)) are vacuolar. N-linked (GlcNAc...) asparagine glycosylation is found at N59, N115, and N118. Zn(2+)-binding residues include H174 and D186. E220 (proton acceptor) is an active-site residue. E221 contacts Zn(2+). N-linked (GlcNAc...) asparagine glycosylation occurs at N237. E246 and H319 together coordinate Zn(2+). The chain crosses the membrane as a helical span at residues 391-411 (LFALSVTLLVIGPLVLFITSI). The Cytoplasmic segment spans residues 412–446 (ALSKTDRMYLFSMSKSLGGASETVSLRGLRGLFRT). The helical transmembrane segment at 447-467 (PIILTVTTVIPIGLAYLLEKI) threads the bilayer. The Vacuolar segment spans residues 468–474 (NPYIVHS). Residues 475 to 495 (SQFAVWSMMLSVWIFVAWFLA) form a helical membrane-spanning segment. The Cytoplasmic segment spans residues 496–508 (RVADFFRPSALHR). A helical transmembrane segment spans residues 509–529 (AYSYTWIFIVTWIMLVISTVY). Residues 530–533 (ANQK) lie on the Vacuolar side of the membrane. The chain crosses the membrane as a helical span at residues 534-554 (GIAAGYFTFFYFAAVFLATWV). The Cytoplasmic portion of the chain corresponds to 555-671 (SYLELFSLPR…WSWTLPRWTW (117 aa)). The tract at residues 579-620 (RSSSLSSRLLTPSADELPSDIGPNGAENVGDPDETDPTESTS) is disordered. The helical transmembrane segment at 672 to 692 (ILQLLLLAPIVIILVGQVGLL) threads the bilayer. At 693-708 (LTTAMSQIGSDGVSTF) the chain is on the vacuolar side. Residues 709 to 729 (IVYLACALFSTLLFAPLLPFI) form a helical membrane-spanning segment. Topologically, residues 730–736 (HRFTYHV) are cytoplasmic. A helical transmembrane segment spans residues 737-757 (PTFLLLIFIGTLIYNLVAFPF). Residues 758-992 (SPANRLKIFF…VEASHDFIIQ (235 aa)) are Vacuolar-facing. N-linked (GlcNAc...) asparagine glycosylation is found at N805, N846, and N954.

Belongs to the peptidase M28 family. Zn(2+) is required as a cofactor.

Its subcellular location is the vacuole membrane. Its function is as follows. May be involved in vacuolar sorting and osmoregulation. The sequence is that of Vacuolar membrane protease from Paracoccidioides brasiliensis (strain Pb03).